The primary structure comprises 312 residues: MLQYQIDRIEHQVADDRAQSGVFLIGPLERGQATTLGNALRRVLMGGLEGSAVTAIRIAGVNHEYATVPGVREDVLDILLNCKELTVNSRSAELEIGRLVVAGPAEVKAGDLQFSSQVQVVDTDRPIATVADGHSLELELHVERGVGYRPVDRHNEETSAIDLLQIDAVFMPVTRVNFTIDETAVAEGGSARERLRMEIVTDGSITPDEALAQSANQLIELFQPLATVTLVEEVPAEPEPSAEAQIPLEELNLSVRAYNCLKRAQVNSVSDLMGFSYEDLLEIKNFGSKSADEVIEALERIGISIPQSRTSA.

Residues 1 to 229 (MLQYQIDRIE…ELFQPLATVT (229 aa)) are alpha N-terminal domain (alpha-NTD). Residues 239 to 312 (EPSAEAQIPL…ISIPQSRTSA (74 aa)) form an alpha C-terminal domain (alpha-CTD) region.

The protein belongs to the RNA polymerase alpha chain family. In cyanobacteria the RNAP catalytic core is composed of 2 alpha, 1 beta, 1 beta', 1 gamma and 1 omega subunit. When a sigma factor is associated with the core the holoenzyme is formed, which can initiate transcription.

The enzyme catalyses RNA(n) + a ribonucleoside 5'-triphosphate = RNA(n+1) + diphosphate. Functionally, DNA-dependent RNA polymerase catalyzes the transcription of DNA into RNA using the four ribonucleoside triphosphates as substrates. The chain is DNA-directed RNA polymerase subunit alpha from Synechococcus sp. (strain CC9605).